An 890-amino-acid polypeptide reads, in one-letter code: MSATRSQRSSTISPARPRRSPATIPMKRPETPSSSHFSASPVTSSSPLLRSSPSPSTSSAAASSTAVASTKLKENITVTIRFRPLSPREVNNGDEIAWYADGDYTIRNEYNPSLCYGFDRVFGPPTTTRRVYDIAAQQVVSGAMSGINGTVFAYGVTSSGKTHTMHGEQRSPGIIPLAVKDVFSIIQETPEREFLLRVSYLEIYNEVINDLLDPTGQNLRIREDSQGTYVEGIKDEVVLSPAHALSLIASGEEHRHVGSNNVNLFSSRSHTMFTLTIESSPHGKGDDGEDVSLSQLHLIDLAGSESSKTEITGQRRKEGSSINKSLLTLGTVISKLTDTKAAHIPYRDSKLTRLLQSTLSGHGRVSLICTITPASSTSEETHNTLKFAQRCKHVEIKASRNKIMDEKSLIKKYQKEISCLQEELTQLRHGNQDDLADRKLQVKLQSRLEDDEEAKAALMGRIQRLTKLILVSTKSSLQAASVKPDHIWRQAFGEDELAYLPDRRRENMADDGAVSTVSEHLKEPRDGNSSLDEMTKDRRKNKTRGMLGWLKLKKSDGVAGTLPTDGNQSQASGSPSSSSKYTQTKTTRRENAAAIKSIPEKTVAGDLFSATVGPEDSSPTGTTIADQMDLLHEQTKILVGEVALRTSSLNRLSEQAARNPEDFHIRDQIQKLEDEISEKKDQIRVLEQQIIEIFGMTPYASDSLGMPQVLSKLTMQLNEKIFEHEIKSADNRILQEQLQMTKSENAEMQETIILLRQQLDSLAERQSTQQIAGDESSGKNIHNRNGEESEIYSGAGTPTSVMSLNRVFAQEETKEIYNETALNSQALEIENLKKEKMRLIEEKDELGKLNKKLTEEASYAKELASAAAVELQNLAEEVTRLCNENAKLSR.

Over residues 1-13 (MSATRSQRSSTIS) the composition is skewed to polar residues. The disordered stretch occupies residues 1 to 66 (MSATRSQRSS…TSSAAASSTA (66 aa)). A mitochondrion-targeting transit peptide spans 1 to 73 (MSATRSQRSS…STAVASTKLK (73 aa)). A compositionally biased stretch (low complexity) spans 40 to 66 (SPVTSSSPLLRSSPSPSTSSAAASSTA). The Kinesin motor domain maps to 75 to 394 (NITVTIRFRP…LKFAQRCKHV (320 aa)). Residue 155 to 162 (GVTSSGKT) coordinates ATP. Positions 395–468 (EIKASRNKIM…MGRIQRLTKL (74 aa)) form a coiled coil. The tract at residues 511–595 (DGAVSTVSEH…TTRRENAAAI (85 aa)) is disordered. Low complexity predominate over residues 569-579 (SQASGSPSSSS). 2 coiled-coil regions span residues 664–693 (HIRD…IIEI) and 729–765 (ADNR…LAER). The segment at 768–797 (TQQIAGDESSGKNIHNRNGEESEIYSGAGT) is disordered. The stretch at 818 to 884 (NETALNSQAL…AEEVTRLCNE (67 aa)) forms a coiled coil.

Belongs to the TRAFAC class myosin-kinesin ATPase superfamily. Kinesin family. KIN-7 subfamily.

It localises to the mitochondrion. In Arabidopsis thaliana (Mouse-ear cress), this protein is Kinesin-like protein KIN-7C, mitochondrial.